The following is a 60-amino-acid chain: Large ribosomal subunit protein uL30 (60 aa).

This sequence belongs to the universal ribosomal protein uL30 family. As to quaternary structure, part of the 50S ribosomal subunit.

This chain is Large ribosomal subunit protein uL30, found in Lactiplantibacillus plantarum (strain ATCC BAA-793 / NCIMB 8826 / WCFS1) (Lactobacillus plantarum).